Here is a 61-residue protein sequence, read N- to C-terminus: Small ribosomal subunit protein uS14 (61 aa).

Cys-24, Cys-27, Cys-40, and Cys-43 together coordinate Zn(2+).

The protein belongs to the universal ribosomal protein uS14 family. Zinc-binding uS14 subfamily. In terms of assembly, part of the 30S ribosomal subunit. Contacts proteins S3 and S10. Requires Zn(2+) as cofactor.

In terms of biological role, binds 16S rRNA, required for the assembly of 30S particles and may also be responsible for determining the conformation of the 16S rRNA at the A site. This chain is Small ribosomal subunit protein uS14, found in Thermobifida fusca (strain YX).